The primary structure comprises 153 residues: NADPH-dependent 7-cyano-7-deazaguanine reductase (153 aa).

The interval 1-22 (MTDNRYDNLGQLGTSTPLPDNP) is disordered. The Thioimide intermediate role is filled by Cys-51. Asp-58 (proton donor) is an active-site residue. Substrate-binding positions include 73–75 (VES) and 92–93 (HE).

This sequence belongs to the GTP cyclohydrolase I family. QueF type 1 subfamily.

It localises to the cytoplasm. It catalyses the reaction 7-aminomethyl-7-carbaguanine + 2 NADP(+) = 7-cyano-7-deazaguanine + 2 NADPH + 3 H(+). It functions in the pathway tRNA modification; tRNA-queuosine biosynthesis. In terms of biological role, catalyzes the NADPH-dependent reduction of 7-cyano-7-deazaguanine (preQ0) to 7-aminomethyl-7-deazaguanine (preQ1). This is NADPH-dependent 7-cyano-7-deazaguanine reductase from Maricaulis maris (strain MCS10) (Caulobacter maris).